Reading from the N-terminus, the 307-residue chain is UPF0276 protein Bphyt_5128 (307 aa).

The protein belongs to the UPF0276 family.

This Paraburkholderia phytofirmans (strain DSM 17436 / LMG 22146 / PsJN) (Burkholderia phytofirmans) protein is UPF0276 protein Bphyt_5128.